We begin with the raw amino-acid sequence, 234 residues long: Phosphoribosylaminoimidazole-succinocarboxamide synthase (234 aa).

It belongs to the SAICAR synthetase family.

The enzyme catalyses 5-amino-1-(5-phospho-D-ribosyl)imidazole-4-carboxylate + L-aspartate + ATP = (2S)-2-[5-amino-1-(5-phospho-beta-D-ribosyl)imidazole-4-carboxamido]succinate + ADP + phosphate + 2 H(+). It functions in the pathway purine metabolism; IMP biosynthesis via de novo pathway; 5-amino-1-(5-phospho-D-ribosyl)imidazole-4-carboxamide from 5-amino-1-(5-phospho-D-ribosyl)imidazole-4-carboxylate: step 1/2. The chain is Phosphoribosylaminoimidazole-succinocarboxamide synthase from Streptococcus pyogenes serotype M3 (strain ATCC BAA-595 / MGAS315).